Consider the following 276-residue polypeptide: MAIRKLKPTSPAKRQMTVSTFEEITTNQPEKSLLEPIKNSGGRNSYGRITVRHRGGAQKRHYRIIDFKRNKDGVPAKVATIEYDPNRSANIALLHYVDGEKRYIIAPQGLKVGDMVESGPNADIKTGNALPLANIPVGTMIHNIEMKPGKGAQLVRAAGNSAQLMAKEGKHALVRLPSTEVRYLPIDCKATIGQVGNQEHENITIGKAGRKRNMGIRPTVRGSAMNPNDHPHGGGEGRTSIGRPAPVTPWGKPALGYKTRDSKKASNKMIVSRRKK.

Residues 219–276 (TVRGSAMNPNDHPHGGGEGRTSIGRPAPVTPWGKPALGYKTRDSKKASNKMIVSRRKK) form a disordered region.

Belongs to the universal ribosomal protein uL2 family. In terms of assembly, part of the 50S ribosomal subunit. Forms a bridge to the 30S subunit in the 70S ribosome.

Its function is as follows. One of the primary rRNA binding proteins. Required for association of the 30S and 50S subunits to form the 70S ribosome, for tRNA binding and peptide bond formation. It has been suggested to have peptidyltransferase activity; this is somewhat controversial. Makes several contacts with the 16S rRNA in the 70S ribosome. The sequence is that of Large ribosomal subunit protein uL2 from Alkaliphilus oremlandii (strain OhILAs) (Clostridium oremlandii (strain OhILAs)).